We begin with the raw amino-acid sequence, 155 residues long: Deoxyuridine 5'-triphosphate nucleotidohydrolase (155 aa).

Residues 74-76, Asn-87, and 91-93 contribute to the substrate site; these read RSG and TID.

The protein belongs to the dUTPase family. Requires Mg(2+) as cofactor.

It catalyses the reaction dUTP + H2O = dUMP + diphosphate + H(+). Its pathway is pyrimidine metabolism; dUMP biosynthesis; dUMP from dCTP (dUTP route): step 2/2. Functionally, this enzyme is involved in nucleotide metabolism: it produces dUMP, the immediate precursor of thymidine nucleotides and it decreases the intracellular concentration of dUTP so that uracil cannot be incorporated into DNA. This chain is Deoxyuridine 5'-triphosphate nucleotidohydrolase, found in Dinoroseobacter shibae (strain DSM 16493 / NCIMB 14021 / DFL 12).